Consider the following 159-residue polypeptide: Phosphopantetheine adenylyltransferase (159 aa).

A substrate-binding site is contributed by threonine 10. ATP-binding positions include 10–11 (TF) and histidine 18. Residues lysine 42, methionine 74, and arginine 88 each contribute to the substrate site. ATP contacts are provided by residues 89-91 (GLR), glutamate 99, and 124-130 (WSFISSS).

The protein belongs to the bacterial CoaD family. As to quaternary structure, homohexamer. Mg(2+) serves as cofactor.

It localises to the cytoplasm. The catalysed reaction is (R)-4'-phosphopantetheine + ATP + H(+) = 3'-dephospho-CoA + diphosphate. Its pathway is cofactor biosynthesis; coenzyme A biosynthesis; CoA from (R)-pantothenate: step 4/5. Functionally, reversibly transfers an adenylyl group from ATP to 4'-phosphopantetheine, yielding dephospho-CoA (dPCoA) and pyrophosphate. The polypeptide is Phosphopantetheine adenylyltransferase (Shigella dysenteriae serotype 1 (strain Sd197)).